The sequence spans 58 residues: Small integral membrane protein 11 (58 aa).

Residues 9–29 (FPLLLYILAAKTLILCLAFAG) form a helical membrane-spanning segment. A coiled-coil region spans residues 29-58 (GVKVYQRKRLEAKQQKVEAEKRKQAEKKES).

The protein resides in the membrane. This Bos taurus (Bovine) protein is Small integral membrane protein 11 (SMIM11).